The chain runs to 192 residues: Fumarylpyruvate hydrolase (192 aa).

Residues E41, E43, and D72 each coordinate a divalent metal cation.

It belongs to the FAH family. The cofactor is Mg(2+). It depends on Mn(2+) as a cofactor.

The enzyme catalyses 3-fumarylpyruvate + H2O = fumarate + pyruvate + H(+). It functions in the pathway aromatic compound metabolism; naphthalene degradation. In terms of biological role, involved in the catabolism of gentisate (2,5-dihydroxybenzoate) a key intermediates in the aerobic pathways for the metabolism of a large number of aromatic compoun such as naphthalene. Catalyzes the hydrolytic cleavage of fumarylpyruvate to form fumarate and pyruvate. The sequence is that of Fumarylpyruvate hydrolase from Ralstonia sp.